Consider the following 286-residue polypeptide: Pyridoxal kinase PdxY (286 aa).

Residues serine 9 and 44–45 each bind substrate; that span reads TQ. ATP contacts are provided by aspartate 111, glutamate 148, and lysine 181. Residue aspartate 222 participates in substrate binding.

This sequence belongs to the pyridoxine kinase family. PdxY subfamily. In terms of assembly, homodimer. Mg(2+) serves as cofactor.

It carries out the reaction pyridoxal + ATP = pyridoxal 5'-phosphate + ADP + H(+). The protein operates within cofactor metabolism; pyridoxal 5'-phosphate salvage; pyridoxal 5'-phosphate from pyridoxal: step 1/1. In terms of biological role, pyridoxal kinase involved in the salvage pathway of pyridoxal 5'-phosphate (PLP). Catalyzes the phosphorylation of pyridoxal to PLP. In Histophilus somni (strain 129Pt) (Haemophilus somnus), this protein is Pyridoxal kinase PdxY.